The sequence spans 124 residues: Splicing factor 3B subunit 6-like protein (124 aa).

The interaction with pre-mRNA branch site stretch occupies residues 16–29; it reads EVNRVLYVRNLPFN. The RRM domain occupies 19-94; it reads RVLYVRNLPF…RYLIVLYYQH (76 aa).

It is found in the nucleus. May be necessary for the splicing of pre-mRNA. The chain is Splicing factor 3B subunit 6-like protein from Arabidopsis thaliana (Mouse-ear cress).